Reading from the N-terminus, the 557-residue chain is Small ribosomal subunit protein bS1 (557 aa).

6 S1 motif domains span residues 21–87, 105–171, 192–260, 277–347, 364–434, and 451–520; these read GSIV…LSRE, SATV…VSRR, GMEV…LGLK, GTKL…LGLK, GDRV…LGVK, and GAIV…LSIR.

It belongs to the bacterial ribosomal protein bS1 family.

Its function is as follows. Binds mRNA; thus facilitating recognition of the initiation point. It is needed to translate mRNA with a short Shine-Dalgarno (SD) purine-rich sequence. The sequence is that of Small ribosomal subunit protein bS1 (rpsA) from Dickeya dadantii (strain 3937) (Erwinia chrysanthemi (strain 3937)).